Consider the following 430-residue polypeptide: Phosphoserine aminotransferase 1, chloroplastic (430 aa).

The N-terminal 51 residues, 1–51, are a transit peptide targeting the chloroplast; the sequence is MAATTNSFLVGSNNTQIPALKPKSSSQSFLHLSKPNTVNFVSKTKPVAVRC. An N-acetylvaline modification is found at valine 52. L-glutamate is bound at residue arginine 111. Pyridoxal 5'-phosphate contacts are provided by residues 145–146, tryptophan 171, threonine 221, aspartate 241, and glutamine 264; that span reads AT. An N6-(pyridoxal phosphate)lysine modification is found at lysine 265. 306-307 is a pyridoxal 5'-phosphate binding site; the sequence is NT.

It belongs to the class-V pyridoxal-phosphate-dependent aminotransferase family. SerC subfamily. Homodimer. It depends on pyridoxal 5'-phosphate as a cofactor. In terms of tissue distribution, ubiquitous, but expressed preferentially in light-grown roots and shoots. Detected in root meristems and in root tissues surrounding the vascular bundle.

The protein resides in the plastid. The protein localises to the chloroplast. The enzyme catalyses O-phospho-L-serine + 2-oxoglutarate = 3-phosphooxypyruvate + L-glutamate. It catalyses the reaction 4-(phosphooxy)-L-threonine + 2-oxoglutarate = (R)-3-hydroxy-2-oxo-4-phosphooxybutanoate + L-glutamate. It functions in the pathway amino-acid biosynthesis; L-serine biosynthesis; L-serine from 3-phospho-D-glycerate: step 2/3. It participates in cofactor biosynthesis; pyridoxine 5'-phosphate biosynthesis; pyridoxine 5'-phosphate from D-erythrose 4-phosphate: step 3/5. Inhibited by high concentration of cysteine and by 3-phosphonooxypyruvate. Not inhibited by serine, threonine, valine, glycine, tryptophan and O-acetyl-L-serine. Functionally, involved in the plastidial phosphorylated pathway of serine biosynthesis (PPSB). Catalyzes the reversible conversion of 3-phosphohydroxypyruvate to phosphoserine. This is Phosphoserine aminotransferase 1, chloroplastic from Arabidopsis thaliana (Mouse-ear cress).